We begin with the raw amino-acid sequence, 254 residues long: Phosphorelay intermediate protein rdeA (254 aa).

Residues 26–123 (EKEFTFELLD…KILSDFKKNW (98 aa)) form the HPt domain. The residue at position 65 (histidine 65) is a Phosphohistidine. The tract at residues 124-254 (DKNHGEGGSD…SNSPTKIQTK (131 aa)) is disordered. The span at 131 to 143 (GSDDGGDDNESEP) shows a compositional bias: acidic residues. Residues 146-160 (NNNNDGSSVNNNDSS) show a composition bias toward low complexity. The segment covering 166-186 (KDIENKNTDENTGKNLNERSK) has biased composition (basic and acidic residues). Residues 220-238 (NNTNSSSNNNSKNENGLNS) show a composition bias toward low complexity. Polar residues predominate over residues 239–254 (KQPQTSSNSPTKIQTK).

In terms of processing, the phosphorelay mechanism involves the sequential transfer of a phosphate group from 'Asp-212' of pde2 to His-65 of rdeA. In vitro, dephosphorylated by dokA.

The protein localises to the cytoplasm. Functionally, phosphorelay protein that supplies phosphate to regA or accepts phosphate from regA; depending on the relative concentration of the phosphodonor proteins. In vitro, acts as a substrate for cheA (bacterial kinase). Plays a role in the development. ypd1 (yeast) can complement rdeA defect. In Dictyostelium discoideum (Social amoeba), this protein is Phosphorelay intermediate protein rdeA (rdeA).